The primary structure comprises 347 residues: Protein RecA (347 aa).

65-72 (GPESSGKT) is an ATP binding site. Over residues 327 to 336 (KFEPTELSRE) the composition is skewed to basic and acidic residues. Positions 327–347 (KFEPTELSREEGDEDTLEDTM) are disordered. Acidic residues predominate over residues 337–347 (EGDEDTLEDTM).

The protein belongs to the RecA family.

The protein localises to the cytoplasm. In terms of biological role, can catalyze the hydrolysis of ATP in the presence of single-stranded DNA, the ATP-dependent uptake of single-stranded DNA by duplex DNA, and the ATP-dependent hybridization of homologous single-stranded DNAs. It interacts with LexA causing its activation and leading to its autocatalytic cleavage. This is Protein RecA from Xylella fastidiosa (strain 9a5c).